Here is a 499-residue protein sequence, read N- to C-terminus: GTPase Der (499 aa).

EngA-type G domains follow at residues Pro3–Leu166 and Ile213–Thr386. GTP-binding positions include Gly9–Ser16, Asp56–Ile60, Asn118–Asp121, Gly219–Ser226, Asp266–Val270, and Asn331–Asp334. One can recognise a KH-like domain in the interval Arg387–Ala471.

Belongs to the TRAFAC class TrmE-Era-EngA-EngB-Septin-like GTPase superfamily. EngA (Der) GTPase family. Associates with the 50S ribosomal subunit.

In terms of biological role, GTPase that plays an essential role in the late steps of ribosome biogenesis. In Aeromonas hydrophila subsp. hydrophila (strain ATCC 7966 / DSM 30187 / BCRC 13018 / CCUG 14551 / JCM 1027 / KCTC 2358 / NCIMB 9240 / NCTC 8049), this protein is GTPase Der.